We begin with the raw amino-acid sequence, 57 residues long: Preprotein translocase subunit SecG (57 aa).

At 1 to 33 the chain is on the cytoplasmic side; it reads MPSSKKKKENVPVMSMAGLIRYYEEEHEKYKVD. The chain crosses the membrane as a helical span at residues 34–55; it reads PIYVIIASIVLVAVVVAVTKII. At 56–57 the chain is on the extracellular side; it reads PP.

The protein belongs to the SEC61-beta family. As to quaternary structure, component of the protein translocase complex. Heterotrimer consisting of alpha (SecY), beta (SecG) and gamma (SecE) subunits. Can form oligomers of the heterotrimer.

It is found in the cell membrane. Its function is as follows. Involved in protein export. The function of the beta subunit is unknown, but it may be involved in stabilization of the trimeric complex. The polypeptide is Preprotein translocase subunit SecG (Metallosphaera sedula (strain ATCC 51363 / DSM 5348 / JCM 9185 / NBRC 15509 / TH2)).